Here is a 189-residue protein sequence, read N- to C-terminus: Interferon alpha-16 (189 aa).

Residues 1–23 form the signal peptide; that stretch reads MALSFSLLMAVLVLSYKSICSLG. Disulfide bonds link Cys-24–Cys-122 and Cys-52–Cys-162.

This sequence belongs to the alpha/beta interferon family.

Its subcellular location is the secreted. Produced by macrophages, IFN-alpha have antiviral activities. Interferon stimulates the production of two enzymes: a protein kinase and an oligoadenylate synthetase. This chain is Interferon alpha-16 (IFNA16), found in Homo sapiens (Human).